The sequence spans 560 residues: NRAMP-like transporter smf-3 (560 aa).

The Cytoplasmic segment spans residues 1–43 (MEGEMKCPIEEIREKPEMRKAQQTYEVQVEVEDTPDTTFSWRK). Residues 44 to 64 (LWAFTGPGFLMSIAYLDPGNI) form a helical membrane-spanning segment. Residues 65–71 (ESDLQAG) are Extracellular-facing. Residues 72–92 (AISYFKLIWVLLVAHIMGLLL) form a helical membrane-spanning segment. At 93–120 (QRLAARLGVVSGKHMAEIAFSYYPKIPR) the chain is on the cytoplasmic side. The chain crosses the membrane as a helical span at residues 121–141 (LVLWMLVESAIVGSDMQEVIG). At 142 to 152 (TAISFYLLSNG) the chain is on the extracellular side. Residues 153–173 (VIPLWAGVLITICDTFTFLFL) form a helical membrane-spanning segment. Topologically, residues 174–182 (EKYGVRKFE) are cytoplasmic. A helical transmembrane segment spans residues 183 to 203 (AFFCFLITCMAITFGYEFGVS). The Extracellular segment spans residues 204 to 229 (APDAGKMFSGMFVPWCNGCDNNMVMQ). A helical transmembrane segment spans residues 230–250 (GVAIIGAVIMPHNFYLHSALV). Over 251 to 268 (KSRRVDRRRAEKVTEANK) the chain is Cytoplasmic. A helical transmembrane segment spans residues 269 to 289 (YFFIESAFALFVSFIINTLVI). Residues 290 to 339 (SVFAQGMYGKTNQDIRDTCYNNTHNGMPDFYKVEFPANNDAAQSDIYHAG) are Extracellular-facing. Asparagine 310 carries N-linked (GlcNAc...) asparagine glycosylation. A helical transmembrane segment spans residues 340 to 360 (IFLGCTFGIFALYVWAVGILA). At 361 to 390 (AGQSSTMTGTYAGQFAMEGFIQIKLPQWKR) the chain is on the cytoplasmic side. A helical membrane pass occupies residues 391–411 (ILITRSLAILPTLAVVIFSGG). At 412 to 420 (IDNISSLND) the chain is on the extracellular side. N-linked (GlcNAc...) asparagine glycosylation is present at asparagine 414. The helical transmembrane segment at 421–441 (FLNCLQLIQLPFALIPVLTFV) threads the bilayer. Over 442–458 (SDRNIMHEYKLASVSKV) the chain is Cytoplasmic. Residues 459 to 479 (VSIVISLIILFINFYFLYSWI) form a helical membrane-spanning segment. At 480 to 486 (GSTFGYN) the chain is on the extracellular side. The helical transmembrane segment at 487–507 (AVSIPITIFCAIFYIIFIAYL) threads the bilayer. Over 508 to 560 (TYYCLVAMEFISPIQTKWLAEPIYHDFDAPWLEDSENPSTKNTISDDELSMRY) the chain is Cytoplasmic.

This sequence belongs to the NRAMP family. As to expression, expressed in dopaminergic neurons (at protein level). Expressed in intestine with a weaker expression in the most proximal and distal regions. Weakly expressed in the hyp1-6, hyp7 and hyp8-12 hypodermis and in head and tail neurons.

It is found in the apical cell membrane. The protein localises to the cytoplasmic vesicle membrane. In terms of biological role, probable divalent metal ion transporter which regulates the uptake of several heavy metals such as Mn(2+), Al(3+) and iron. Plays a role in modulating Al(3+)-induced dopamine (DA) neuron degeneration through the intracellular sequestration of Al(3+). The protein is NRAMP-like transporter smf-3 of Caenorhabditis elegans.